The following is a 101-amino-acid chain: Large ribosomal subunit protein bL21 (101 aa).

Belongs to the bacterial ribosomal protein bL21 family. Part of the 50S ribosomal subunit. Contacts protein L20.

Its function is as follows. This protein binds to 23S rRNA in the presence of protein L20. This Beutenbergia cavernae (strain ATCC BAA-8 / DSM 12333 / CCUG 43141 / JCM 11478 / NBRC 16432 / NCIMB 13614 / HKI 0122) protein is Large ribosomal subunit protein bL21.